We begin with the raw amino-acid sequence, 271 residues long: Glutamate racemase (271 aa).

Residues 10–11 (DS) and 42–43 (YG) each bind substrate. The active-site Proton donor/acceptor is the Cys-73. Position 74-75 (74-75 (NT)) interacts with substrate. Catalysis depends on Cys-183, which acts as the Proton donor/acceptor. 184–185 (TH) contacts substrate.

The protein belongs to the aspartate/glutamate racemases family.

The enzyme catalyses L-glutamate = D-glutamate. The protein operates within cell wall biogenesis; peptidoglycan biosynthesis. Its function is as follows. Provides the (R)-glutamate required for cell wall biosynthesis. The protein is Glutamate racemase of Streptococcus thermophilus (strain CNRZ 1066).